The following is a 353-amino-acid chain: MSKEFEVPRSVEWEENHINILNQQKLPAETVFEHLYTKEDVYDAIVTLKVRGAPAIGITAAFGLALSAQDIETEDIDVFKQEVIQIKEYLNSARPTAVNLAWALERLLRRIERAASVNAAKTDLVHEAIQIQIEDEETCRQIGQNALQLFKSGDRIMTICNAGSIATSRYGTALAPFYLAKKKNLDLHIYACETRPVLQGARLTTWELMQGGVDVTLITDNMAAHTMKEKQISAVIVGADRIARNGDAANKIGTLSLAILAKHFQIPFFIAAPLSTFDVSTKDGSDIPIEERDPLEVKEFNGVQIAPPDVQVFNPAFDVTPHHLISGIITEKGIITSNYTEEIDALFAENISL.

Residues 51–53 (RGA), Arg-94, and Gln-199 contribute to the substrate site. The active-site Proton donor is the Asp-240. 250-251 (NK) lines the substrate pocket.

This sequence belongs to the eIF-2B alpha/beta/delta subunits family. MtnA subfamily. Homodimer.

It carries out the reaction 5-(methylsulfanyl)-alpha-D-ribose 1-phosphate = 5-(methylsulfanyl)-D-ribulose 1-phosphate. It participates in amino-acid biosynthesis; L-methionine biosynthesis via salvage pathway; L-methionine from S-methyl-5-thio-alpha-D-ribose 1-phosphate: step 1/6. Its function is as follows. Catalyzes the interconversion of methylthioribose-1-phosphate (MTR-1-P) into methylthioribulose-1-phosphate (MTRu-1-P). This chain is Methylthioribose-1-phosphate isomerase, found in Bacillus pumilus (strain SAFR-032).